The chain runs to 583 residues: Threonine--tRNA ligase (583 aa).

The catalytic stretch occupies residues 185 to 478 (DHRKLGRELD…LVEHYGGAFP (294 aa)). 3 residues coordinate Zn(2+): Cys-278, His-329, and His-455.

Belongs to the class-II aminoacyl-tRNA synthetase family. Homodimer. Requires Zn(2+) as cofactor.

The protein resides in the cytoplasm. The catalysed reaction is tRNA(Thr) + L-threonine + ATP = L-threonyl-tRNA(Thr) + AMP + diphosphate + H(+). Catalyzes the attachment of threonine to tRNA(Thr) in a two-step reaction: L-threonine is first activated by ATP to form Thr-AMP and then transferred to the acceptor end of tRNA(Thr). Also edits incorrectly charged L-seryl-tRNA(Thr). The protein is Threonine--tRNA ligase of Borrelia hermsii (strain HS1 / DAH).